The sequence spans 638 residues: Sodium- and chloride-dependent neutral and basic amino acid transporter B(0+) (638 aa).

The Cytoplasmic segment spans residues 1-44 (MDRLKCPNFFKCRQKEKVTASSENFHVGENDENQERGNWSKKSD). Transmembrane regions (helical) follow at residues 45 to 65 (YLLS…FPYL), 72 to 92 (GAFL…LFFL), and 110 to 130 (ILPL…FVAI). Residues 131–230 (YYNVIIAYSL…RSSGMDETGV (100 aa)) lie on the Extracellular side of the membrane. Residues asparagine 155, asparagine 163, asparagine 174, asparagine 185, asparagine 193, and asparagine 198 are each glycosylated (N-linked (GlcNAc...) asparagine). 2 consecutive transmembrane segments (helical) span residues 231-251 (VVWY…AALF) and 257-277 (SGKV…ILLI). Asparagine 298 carries N-linked (GlcNAc...) asparagine glycosylation. The next 7 membrane-spanning stretches (helical) occupy residues 311 to 331 (AATQ…ALSS), 344 to 364 (IIVC…IFSI), 395 to 415 (LAQL…LLTL), 453 to 473 (ILFL…VHLI), 476 to 496 (FCAG…IIWI), 524 to 544 (CWFV…LVKF), and 559 to 579 (VALG…MAII). At 580-638 (KIVQAEGNILQRIISCCRPASNWGPYLEKHRGERYRDMAEPAKETDHEIPTISGSTKPE) the chain is on the cytoplasmic side. The segment covering 618 to 628 (AEPAKETDHEI) has biased composition (basic and acidic residues). Positions 618-638 (AEPAKETDHEIPTISGSTKPE) are disordered.

It belongs to the sodium:neurotransmitter symporter (SNF) (TC 2.A.22) family. SLC6A14 subfamily. Expressed in the distal region of the intestinal tract: cecum and colon.

It is found in the membrane. The protein localises to the apical cell membrane. The enzyme catalyses glycine(out) + chloride(out) + 2 Na(+)(out) = glycine(in) + chloride(in) + 2 Na(+)(in). It carries out the reaction L-leucine(out) + chloride(out) + 2 Na(+)(out) = L-leucine(in) + chloride(in) + 2 Na(+)(in). The catalysed reaction is L-glutamine(out) + chloride(out) + 2 Na(+)(out) = L-glutamine(in) + chloride(in) + 2 Na(+)(in). It catalyses the reaction L-arginine(out) + chloride(out) + 2 Na(+)(out) = L-arginine(in) + chloride(in) + 2 Na(+)(in). The enzyme catalyses (R)-carnitine(out) + chloride(out) + 2 Na(+)(out) = (R)-carnitine(in) + chloride(in) + 2 Na(+)(in). It carries out the reaction O-propanoyl-(R)-carnitine(out) + chloride(out) + 2 Na(+)(out) = O-propanoyl-(R)-carnitine(in) + chloride(in) + 2 Na(+)(in). The catalysed reaction is L-isoleucine(out) + chloride(out) + 2 Na(+)(out) = L-isoleucine(in) + chloride(in) + 2 Na(+)(in). It catalyses the reaction L-methionine(out) + chloride(out) + 2 Na(+)(out) = L-methionine(in) + chloride(in) + 2 Na(+)(in). The enzyme catalyses L-valine(out) + chloride(out) + 2 Na(+)(out) = L-valine(in) + chloride(in) + 2 Na(+)(in). It carries out the reaction L-alanine(out) + chloride(out) + 2 Na(+)(out) = L-alanine(in) + chloride(in) + 2 Na(+)(in). The catalysed reaction is L-serine(out) + chloride(out) + 2 Na(+)(out) = L-serine(in) + chloride(in) + 2 Na(+)(in). It catalyses the reaction L-cysteine(out) + chloride(out) + 2 Na(+)(out) = L-cysteine(in) + chloride(in) + 2 Na(+)(in). The enzyme catalyses L-asparagine(out) + chloride(out) + 2 Na(+)(out) = L-asparagine(in) + chloride(in) + 2 Na(+)(in). It carries out the reaction L-threonine(out) + chloride(out) + 2 Na(+)(out) = L-threonine(in) + chloride(in) + 2 Na(+)(in). The catalysed reaction is L-phenylalanine(out) + chloride(out) + 2 Na(+)(out) = L-phenylalanine(in) + chloride(in) + 2 Na(+)(in). It catalyses the reaction L-tryptophan(out) + chloride(out) + 2 Na(+)(out) = L-tryptophan(in) + chloride(in) + 2 Na(+)(in). The enzyme catalyses L-tyrosine(out) + chloride(out) + 2 Na(+)(out) = L-tyrosine(in) + chloride(in) + 2 Na(+)(in). It carries out the reaction L-histidine(out) + chloride(out) + 2 Na(+)(out) = L-histidine(in) + chloride(in) + 2 Na(+)(in). The catalysed reaction is L-lysine(out) + chloride(out) + 2 Na(+)(out) = L-lysine(in) + chloride(in) + 2 Na(+)(in). It catalyses the reaction O-butanoyl-(R)-carnitine(out) + chloride(out) + 2 Na(+)(out) = O-butanoyl-(R)-carnitine(in) + chloride(in) + 2 Na(+)(in). Functionally, amino acid transporter that plays an important role in the absorption of amino acids in the intestinal tract. Mediates the uptake of a broad range of neutral and cationic amino acids (with the exception of proline) in a Na(+)/Cl(-)-dependent manner. Transports non-alpha-amino acids such as beta-alanine with low affinity, and has a higher affinity for dipolar and cationic amino acids such as leucine and lysine. Can also transport carnitine, butyrylcarnitine and propionylcarnitine coupled to the transmembrane gradients of Na(+) and Cl(-). The polypeptide is Sodium- and chloride-dependent neutral and basic amino acid transporter B(0+) (Mus musculus (Mouse)).